Here is a 428-residue protein sequence, read N- to C-terminus: C4-dicarboxylate transport protein (428 aa).

The next 8 helical transmembrane spans lie at 8 to 28 (VLYV…HYYP), 44 to 64 (LIKM…IAGM), 78 to 98 (LLYF…ATHI), 148 to 168 (GEIL…AHLG), 184 to 204 (VLFG…FGAM), 222 to 242 (LIGT…GAIA), 307 to 327 (IYMT…LTWM), and 355 to 375 (AATL…ILGI).

This sequence belongs to the dicarboxylate/amino acid:cation symporter (DAACS) (TC 2.A.23) family.

It localises to the cell inner membrane. In terms of biological role, responsible for the transport of dicarboxylates such as succinate, fumarate, and malate from the periplasm across the membrane. This is C4-dicarboxylate transport protein from Burkholderia pseudomallei (strain 1106a).